Here is a 409-residue protein sequence, read N- to C-terminus: MVKGVKGRPNVLAIVLAGGEGKRLFPLTEDRAKPAVPFGGTYRLIDFVLSNLVNSGFLKIAVLTQYKSHSLDRHISLSWNVSGPTGQYIASVPAQQRLGKRWFTGSADAILQSLNLISDEKPDYVIVFGADHVYRMDPSQMLDEHIASGRAVSVAGIRVPREEATAFGCIQSDDDGNITEFLEKPADPPGTPDDPDMTYASMGNYIFTTEALIQALKDDENNENSDHDMGGDIIPYFVSRNDAHVYDFSGNIVPGATERDKGYWRDVGTIDAFYECHMDLISVHPIFNLYNSEWPIHTTSEGNLPPAKFVRGGIAQSSMVSSGSIISAGTVRNSVLSNNVVVEEGATVEGAVLMPGVRIGKGAVVRHAILDKNVVVRDGELIGVDHVRDAQRFKVSAGGVVVVGKNQVV.

Alpha-D-glucose 1-phosphate-binding positions include Gly-168, 183–184 (EK), and Ser-201.

The protein belongs to the bacterial/plant glucose-1-phosphate adenylyltransferase family. Homotetramer.

The enzyme catalyses alpha-D-glucose 1-phosphate + ATP + H(+) = ADP-alpha-D-glucose + diphosphate. Its pathway is glycan biosynthesis; glycogen biosynthesis. Involved in the biosynthesis of ADP-glucose, a building block required for the elongation reactions to produce glycogen. Catalyzes the reaction between ATP and alpha-D-glucose 1-phosphate (G1P) to produce pyrophosphate and ADP-Glc. The sequence is that of Glucose-1-phosphate adenylyltransferase from Corynebacterium glutamicum (strain R).